The primary structure comprises 336 residues: Iron-uptake system permease protein FeuC (336 aa).

The next 9 helical transmembrane spans lie at Leu-7–Val-27, Val-57–Ile-77, Pro-85–Phe-105, Met-120–Trp-140, Ile-150–Leu-170, Ala-191–Ile-211, Val-246–Ala-266, Tyr-280–Gly-300, and Glu-308–Phe-328.

The protein belongs to the binding-protein-dependent transport system permease family. FecCD subfamily. As to quaternary structure, the complex is composed of one ATP-binding protein (YusV), two transmembrane proteins (FeuB and FeuC) and a solute-binding protein (FeuA).

The protein localises to the cell membrane. Functionally, involved in the uptake of iron. Probably responsible for the translocation of the substrate across the membrane. Its function is as follows. Part of the ABC transporter complex FeuABC/YusV involved in import of the catecholate siderophores bacillibactin and enterobactin. This is Iron-uptake system permease protein FeuC (feuC) from Bacillus subtilis (strain 168).